Here is a 284-residue protein sequence, read N- to C-terminus: NAD kinase (284 aa).

D61 serves as the catalytic Proton acceptor. NAD(+) contacts are provided by residues 61–62, R66, 136–137, R147, K164, D166, and L201; these read DG and ND.

It belongs to the NAD kinase family. A divalent metal cation serves as cofactor.

Its subcellular location is the cytoplasm. It catalyses the reaction NAD(+) + ATP = ADP + NADP(+) + H(+). Its function is as follows. Involved in the regulation of the intracellular balance of NAD and NADP, and is a key enzyme in the biosynthesis of NADP. Catalyzes specifically the phosphorylation on 2'-hydroxyl of the adenosine moiety of NAD to yield NADP. This chain is NAD kinase, found in Dehalococcoides mccartyi (strain ATCC BAA-2100 / JCM 16839 / KCTC 5957 / BAV1).